The primary structure comprises 608 residues: tRNA (guanine(37)-N(1))-methyltransferase 1 (608 aa).

Residues 207–229 form a disordered region; that stretch reads SRPKKKKRRKEEERSEGKKRTGK. Basic and acidic residues predominate over residues 216-229; sequence KEEERSEGKKRTGK. Residues Arg425, 463-464, 491-492, and Asn514 each bind S-adenosyl-L-methionine; these read DL and DG.

Belongs to the class I-like SAM-binding methyltransferase superfamily. TRM5/TYW2 family. As to quaternary structure, monomer.

Its subcellular location is the mitochondrion matrix. The protein localises to the nucleus. The protein resides in the cytoplasm. It carries out the reaction guanosine(37) in tRNA + S-adenosyl-L-methionine = N(1)-methylguanosine(37) in tRNA + S-adenosyl-L-homocysteine + H(+). Specifically methylates the N1 position of guanosine-37 in various cytoplasmic and mitochondrial tRNAs. Methylation is not dependent on the nature of the nucleoside 5' of the target nucleoside. This is the first step in the biosynthesis of wybutosine (yW), a modified base adjacent to the anticodon of tRNAs and required for accurate decoding. The sequence is that of tRNA (guanine(37)-N(1))-methyltransferase 1 from Vitis vinifera (Grape).